The following is a 407-amino-acid chain: Carbamoyl phosphate synthase small chain (407 aa).

The interval 1–205 (MTETTPKTAP…LQDGYGEQDA (205 aa)) is CPSase. L-glutamine-binding residues include S60, G257, and G259. The 189-residue stretch at 209–397 (HVVALDFGVK…INLIRERKGQ (189 aa)) folds into the Glutamine amidotransferase type-1 domain. Catalysis depends on C286, which acts as the Nucleophile. L-glutamine-binding residues include L287, Q290, N328, G330, and F331. Active-site residues include H370 and E372.

This sequence belongs to the CarA family. Composed of two chains; the small (or glutamine) chain promotes the hydrolysis of glutamine to ammonia, which is used by the large (or ammonia) chain to synthesize carbamoyl phosphate. Tetramer of heterodimers (alpha,beta)4.

It catalyses the reaction hydrogencarbonate + L-glutamine + 2 ATP + H2O = carbamoyl phosphate + L-glutamate + 2 ADP + phosphate + 2 H(+). The catalysed reaction is L-glutamine + H2O = L-glutamate + NH4(+). It functions in the pathway amino-acid biosynthesis; L-arginine biosynthesis; carbamoyl phosphate from bicarbonate: step 1/1. It participates in pyrimidine metabolism; UMP biosynthesis via de novo pathway; (S)-dihydroorotate from bicarbonate: step 1/3. Functionally, small subunit of the glutamine-dependent carbamoyl phosphate synthetase (CPSase). CPSase catalyzes the formation of carbamoyl phosphate from the ammonia moiety of glutamine, carbonate, and phosphate donated by ATP, constituting the first step of 2 biosynthetic pathways, one leading to arginine and/or urea and the other to pyrimidine nucleotides. The small subunit (glutamine amidotransferase) binds and cleaves glutamine to supply the large subunit with the substrate ammonia. The chain is Carbamoyl phosphate synthase small chain from Brucella abortus (strain S19).